The primary structure comprises 247 residues: V-type proton ATPase subunit D (247 aa).

The protein belongs to the V-ATPase D subunit family. V-ATPase is a heteromultimeric enzyme made up of two complexes: the ATP-hydrolytic V1 complex and the proton translocation V0 complex. The V1 complex consists of three catalytic AB heterodimers that form a heterohexamer, three peripheral stalks each consisting of EG heterodimers, one central rotor including subunits D and F, and the regulatory subunits C and H. The proton translocation complex V0 consists of the proton transport subunit a, a ring of proteolipid subunits c9c'', rotary subunit d, subunits e and f, and the accessory subunits ATP6AP1/Ac45 and ATP6AP2/PRR. Interacts with SNX10.

The protein localises to the membrane. It is found in the cytoplasmic vesicle. Its subcellular location is the clathrin-coated vesicle membrane. The protein resides in the cytoplasm. It localises to the cytoskeleton. The protein localises to the microtubule organizing center. It is found in the centrosome. Its subcellular location is the cell projection. The protein resides in the cilium. Its function is as follows. Subunit of the V1 complex of vacuolar(H+)-ATPase (V-ATPase), a multisubunit enzyme composed of a peripheral complex (V1) that hydrolyzes ATP and a membrane integral complex (V0) that translocates protons. V-ATPase is responsible for acidifying and maintaining the pH of intracellular compartments and in some cell types, is targeted to the plasma membrane, where it is responsible for acidifying the extracellular environment. May play a role in cilium biogenesis through regulation of the transport and the localization of proteins to the cilium. This chain is V-type proton ATPase subunit D (ATP6V1D), found in Homo sapiens (Human).